The following is a 230-amino-acid chain: Orotidine 5'-phosphate decarboxylase (230 aa).

Substrate-binding positions include D10, K32, 59–68 (DLKYHDIPNT), T119, R180, Q189, G209, and R210. K61 (proton donor) is an active-site residue.

This sequence belongs to the OMP decarboxylase family. Type 1 subfamily. As to quaternary structure, homodimer.

The enzyme catalyses orotidine 5'-phosphate + H(+) = UMP + CO2. It participates in pyrimidine metabolism; UMP biosynthesis via de novo pathway; UMP from orotate: step 2/2. Its function is as follows. Catalyzes the decarboxylation of orotidine 5'-monophosphate (OMP) to uridine 5'-monophosphate (UMP). This is Orotidine 5'-phosphate decarboxylase from Haemophilus ducreyi (strain 35000HP / ATCC 700724).